The chain runs to 177 residues: Large ribosomal subunit protein uL6 (177 aa).

This sequence belongs to the universal ribosomal protein uL6 family. Part of the 50S ribosomal subunit.

Functionally, this protein binds to the 23S rRNA, and is important in its secondary structure. It is located near the subunit interface in the base of the L7/L12 stalk, and near the tRNA binding site of the peptidyltransferase center. In Rickettsia conorii (strain ATCC VR-613 / Malish 7), this protein is Large ribosomal subunit protein uL6.